A 529-amino-acid polypeptide reads, in one-letter code: MAAKRGRNRSPSPDPEGMFAGMVVFMVEIGVQRRRLQIWKQKLVQMGAVIEEDRVTKKVTHVLAMNLEALLHKFGKERLSHFTARLMLYQWLEDSLTSGEKANEDLYVLKIDSEEVDKPKKSLPAISGSEDQSSPQKRTRYSPDAGDFKGVESHSNTQGSPDSPTSCSVPSTSASPGEGIAETPTSPQSESTSVYKPPDLNRNITEIFGKLINIYRALGEDRRSFSYYKAIPVIEKFPTRIESVDQLKHLPGIGKAMRDHIQEIVTTGKLSKLEHFETDEKVRTISLFGEVWGVGPATALKLYEKGHRTLEDLKNEDSLTHAQKLGLKYFDDIKTRIPRQEVQEMEQLLQRVGEETLPGVNIVCGGSYRRGKATCGDLDIVVTHPDGQSHKGFLTKFVKRLKEMNFLREDLIFSTHSEEGTDSGVDTYFGLCTYPGQELRRRIDFKVYPRDIYSFGLIAWTGNDVLNRRLRLLAESKGYRLDDTGLFPATHSSSGNRGARGTASLKLSTEKQVFDFLGFPWLEPHERNL.

The BRCT domain occupies 14 to 109; the sequence is DPEGMFAGMV…EKANEDLYVL (96 aa). The tract at residues 119 to 199 is disordered; sequence PKKSLPAISG…ESTSVYKPPD (81 aa). Residues 153-175 show a composition bias toward polar residues; it reads SHSNTQGSPDSPTSCSVPSTSAS. Residues 182–193 are compositionally biased toward low complexity; the sequence is ETPTSPQSESTS. A DNA-binding region spans residues 213–227; that stretch reads NIYRALGEDRRSFSY. Histidine 260 is an active-site residue. The interval 295–298 is DNA-binding; the sequence is GPAT. DCTP-binding positions include arginine 336, 367-370, and 376-379; these read SYRR and GDLD. The segment at 370-379 is involved in primer binding; that stretch reads RGKATCGDLD. Residues aspartate 377, aspartate 379, and aspartate 444 each contribute to the Mn(2+) site. The segment at 418-459 is DNA-binding; the sequence is EEGTDSGVDTYFGLCTYPGQELRRRIDFKVYPRDIYSFGLIA. Asparagine 467 contacts dCTP.

The protein belongs to the DNA polymerase type-X family. As to quaternary structure, interacts with the DNA repair proteins XRCC4 and LIG4. Interacts with HSP90-1. The cofactor is Mn(2+).

The protein resides in the nucleus. It catalyses the reaction DNA(n) + a 2'-deoxyribonucleoside 5'-triphosphate = DNA(n+1) + diphosphate. Repair polymerase involved in base excision repair (BER) and responsible for repair of lesions that give rise to abasic (AP) sites in DNA. Has both DNA polymerase and terminal transferase activities. Has a 5'-deoxyribose-5-phosphate lyase (dRP lyase) activity. Involved in the repair of transposon-induced DNA double strand breaks (DSBs). Involved in repair of UV-B-mediated DNA damage during seedling development through an excision repair mechanism. Involved the repair of DSBs induced by high salinity and DNA cross-linking agent. Functions via the DNA non-homologous end joining (NHEJ) pathway. This Arabidopsis thaliana (Mouse-ear cress) protein is DNA polymerase lambda.